A 147-amino-acid chain; its full sequence is MSIQDRPNRPARGGRGRYTPKRKICSFCAEKVSRIDYKDSAKLARYISDRGKIEPRRRTGTCARHQRALANAIKRARFIALMPFVSEHVRRQGNVATFSPIRELRPEPKIAEAKIEPKVEVKAEVAVPEVKAEVKPAAEASKPAESA.

The protein belongs to the bacterial ribosomal protein bS18 family. As to quaternary structure, part of the 30S ribosomal subunit. Forms a tight heterodimer with protein bS6.

Functionally, binds as a heterodimer with protein bS6 to the central domain of the 16S rRNA, where it helps stabilize the platform of the 30S subunit. The sequence is that of Small ribosomal subunit protein bS18 from Dehalococcoides mccartyi (strain ATCC BAA-2100 / JCM 16839 / KCTC 5957 / BAV1).